Here is a 254-residue protein sequence, read N- to C-terminus: Hemin import ATP-binding protein HmuV (254 aa).

One can recognise an ABC transporter domain in the interval 2-239; sequence LNINQVNINL…DTLSQVWHYD (238 aa). An ATP-binding site is contributed by 34–41; that stretch reads GPNGAGKS.

Belongs to the ABC transporter superfamily. Heme (hemin) importer (TC 3.A.1.14.5) family. In terms of assembly, the complex is composed of two ATP-binding proteins (HmuV), two transmembrane proteins (HmuU) and a solute-binding protein (HmuT).

Its subcellular location is the cell inner membrane. Part of the ABC transporter complex HmuTUV involved in hemin import. Responsible for energy coupling to the transport system. This chain is Hemin import ATP-binding protein HmuV, found in Shewanella denitrificans (strain OS217 / ATCC BAA-1090 / DSM 15013).